The following is a 115-amino-acid chain: Aspartate 1-decarboxylase (115 aa).

The Schiff-base intermediate with substrate; via pyruvic acid role is filled by S25. S25 is modified (pyruvic acid (Ser)). Position 57 (T57) interacts with substrate. Y58 (proton donor) is an active-site residue. Substrate is bound at residue 72–74; the sequence is GAA.

Belongs to the PanD family. As to quaternary structure, heterooctamer of four alpha and four beta subunits. Requires pyruvate as cofactor. In terms of processing, is synthesized initially as an inactive proenzyme, which is activated by self-cleavage at a specific serine bond to produce a beta-subunit with a hydroxyl group at its C-terminus and an alpha-subunit with a pyruvoyl group at its N-terminus.

The protein resides in the cytoplasm. The catalysed reaction is L-aspartate + H(+) = beta-alanine + CO2. Its pathway is cofactor biosynthesis; (R)-pantothenate biosynthesis; beta-alanine from L-aspartate: step 1/1. Functionally, catalyzes the pyruvoyl-dependent decarboxylation of aspartate to produce beta-alanine. This Campylobacter fetus subsp. fetus (strain 82-40) protein is Aspartate 1-decarboxylase.